The sequence spans 205 residues: Small ribosomal subunit protein uS4 (205 aa).

The region spanning 94–157 (SRLDTVVYRM…KQIPLIQESV (64 aa)) is the S4 RNA-binding domain.

The protein belongs to the universal ribosomal protein uS4 family. Part of the 30S ribosomal subunit. Contacts protein S5. The interaction surface between S4 and S5 is involved in control of translational fidelity.

Its function is as follows. One of the primary rRNA binding proteins, it binds directly to 16S rRNA where it nucleates assembly of the body of the 30S subunit. Functionally, with S5 and S12 plays an important role in translational accuracy. This Rickettsia felis (strain ATCC VR-1525 / URRWXCal2) (Rickettsia azadi) protein is Small ribosomal subunit protein uS4.